A 209-amino-acid polypeptide reads, in one-letter code: Potassium-transporting ATPase KdpC subunit (209 aa).

The helical transmembrane segment at 18–38 threads the bilayer; that stretch reads MLAVFTLFGLGLAYSLVATGI.

This sequence belongs to the KdpC family. As to quaternary structure, the system is composed of three essential subunits: KdpA, KdpB and KdpC.

The protein resides in the cell inner membrane. Functionally, part of the high-affinity ATP-driven potassium transport (or Kdp) system, which catalyzes the hydrolysis of ATP coupled with the electrogenic transport of potassium into the cytoplasm. This subunit acts as a catalytic chaperone that increases the ATP-binding affinity of the ATP-hydrolyzing subunit KdpB by the formation of a transient KdpB/KdpC/ATP ternary complex. This Xanthomonas oryzae pv. oryzae (strain MAFF 311018) protein is Potassium-transporting ATPase KdpC subunit.